A 353-amino-acid chain; its full sequence is Heat-inducible transcription repressor HrcA (353 aa).

This sequence belongs to the HrcA family.

Its function is as follows. Negative regulator of class I heat shock genes (grpE-dnaK-dnaJ and groELS operons). Prevents heat-shock induction of these operons. The protein is Heat-inducible transcription repressor HrcA of Anaeromyxobacter dehalogenans (strain 2CP-1 / ATCC BAA-258).